We begin with the raw amino-acid sequence, 161 residues long: Eukaryotic translation initiation factor 5A-1 (161 aa).

Basic and acidic residues predominate over residues 1-12 (MSDEEHQFESKA). The interval 1 to 21 (MSDEEHQFESKADAGASKTYP) is disordered. Hypusine is present on K52.

Belongs to the eIF-5A family. Lys-52 undergoes hypusination, a unique post-translational modification that consists in the addition of a butylamino group from spermidine to lysine side chain, leading to the formation of the unusual amino acid hypusine. eIF-5As are the only known proteins to undergo this modification, which is essential for their function.

Functionally, translation factor that promotes translation elongation and termination, particularly upon ribosome stalling at specific amino acid sequence contexts. Binds between the exit (E) and peptidyl (P) site of the ribosome and promotes rescue of stalled ribosome: specifically required for efficient translation of polyproline-containing peptides as well as other motifs that stall the ribosome. Acts as a ribosome quality control (RQC) cofactor by joining the RQC complex to facilitate peptidyl transfer during CAT tailing step. This is Eukaryotic translation initiation factor 5A-1 from Medicago sativa (Alfalfa).